A 239-amino-acid chain; its full sequence is Geranylgeranylglyceryl phosphate synthase (239 aa).

Mg(2+)-binding residues include Asp-18 and Ser-45. Residues Tyr-166–Gly-172, Gly-197–Gly-198, and Gly-219–Thr-220 each bind sn-glycerol 1-phosphate.

It belongs to the GGGP/HepGP synthase family. Group II subfamily. Mg(2+) is required as a cofactor.

The protein localises to the cytoplasm. It catalyses the reaction sn-glycerol 1-phosphate + (2E,6E,10E)-geranylgeranyl diphosphate = sn-3-O-(geranylgeranyl)glycerol 1-phosphate + diphosphate. The protein operates within membrane lipid metabolism; glycerophospholipid metabolism. In terms of biological role, prenyltransferase that catalyzes the transfer of the geranylgeranyl moiety of geranylgeranyl diphosphate (GGPP) to the C3 hydroxyl of sn-glycerol-1-phosphate (G1P). This reaction is the first ether-bond-formation step in the biosynthesis of archaeal membrane lipids. The chain is Geranylgeranylglyceryl phosphate synthase from Pyrobaculum islandicum (strain DSM 4184 / JCM 9189 / GEO3).